Consider the following 624-residue polypeptide: Probable pectinesterase/pectinesterase inhibitor 47 (624 aa).

The N-terminal stretch at 1–19 (MQTHSSSLVFLALLCLSWA) is a signal peptide. The disordered stretch occupies residues 24-88 (PTRPPSQPPS…PSPLPPNIAC (65 aa)). Residues 25–84 (TRPPSQPPSHPPIQPSSQPPTQPPSQPPTQPPTQPPSHPPTQPPTPPPSQSPSQPSPLPP) are compositionally biased toward pro residues. The pectinesterase inhibitor 47 stretch occupies residues 74–236 (QSPSQPSPLP…TRLYSVSLGL (163 aa)). 4 N-linked (GlcNAc...) asparagine glycosylation sites follow: Asn-225, Asn-330, Asn-369, and Asn-376. Residues 307–606 (AVTVGPYETD…FTVYNFTLGD (300 aa)) are pectinesterase 47. A substrate-binding site is contributed by Thr-385. An N-linked (GlcNAc...) asparagine glycan is attached at Asn-387. Gln-415 is a binding site for substrate. The Proton donor; for pectinesterase activity role is filled by Asp-438. A disulfide bridge links Cys-452 with Cys-472. Asp-459 serves as the catalytic Nucleophile; for pectinesterase activity. A glycan (N-linked (GlcNAc...) asparagine) is linked at Asn-505. The substrate site is built by Arg-527 and Trp-529. N-linked (GlcNAc...) asparagine glycosylation is found at Asn-555, Asn-596, and Asn-601.

This sequence in the N-terminal section; belongs to the PMEI family. In the C-terminal section; belongs to the pectinesterase family.

It is found in the secreted. Its subcellular location is the cell wall. The enzyme catalyses [(1-&gt;4)-alpha-D-galacturonosyl methyl ester](n) + n H2O = [(1-&gt;4)-alpha-D-galacturonosyl](n) + n methanol + n H(+). Its pathway is glycan metabolism; pectin degradation; 2-dehydro-3-deoxy-D-gluconate from pectin: step 1/5. Acts in the modification of cell walls via demethylesterification of cell wall pectin. In Arabidopsis thaliana (Mouse-ear cress), this protein is Probable pectinesterase/pectinesterase inhibitor 47 (PME47).